Consider the following 125-residue polypeptide: Small ribosomal subunit protein uS12c (125 aa).

This sequence belongs to the universal ribosomal protein uS12 family. Part of the 30S ribosomal subunit.

Its subcellular location is the plastid. It is found in the chloroplast. Its function is as follows. With S4 and S5 plays an important role in translational accuracy. Located at the interface of the 30S and 50S subunits. The polypeptide is Small ribosomal subunit protein uS12c (rps12) (Tupiella akineta (Green alga)).